The chain runs to 473 residues: Vasculin-like protein 1 (473 aa).

Polar residues predominate over residues 14–25 (STPQSSKSSTAT). The interval 14-55 (STPQSSKSSTATFDKHGEHLSRGEGRFGISRRRHNSSDGFFN) is disordered. The segment covering 26-38 (FDKHGEHLSRGEG) has biased composition (basic and acidic residues). A phosphoserine mark is found at Ser49 and Ser76. 2 disordered regions span residues 88–127 (GTTGWHGSSRGHDGMSQRSGGSSTGNHRHWNGSFHSRKGC) and 155–189 (DFPSLNPEAGKQNQPCRPVGTPSGVWENPPSAKQP). Over residues 103 to 112 (SQRSGGSSTG) the composition is skewed to polar residues. The span at 113–125 (NHRHWNGSFHSRK) shows a compositional bias: basic residues. Ser199 carries the phosphoserine modification. Disordered stretches follow at residues 235–267 (LVPKPAPPPSKPNAWKANRTEHKPGSLCSSRES) and 281–316 (LAAGAGLHSPKESPSSTTPPIEISSSRLTKLTRRTT). A Phosphoserine modification is found at Ser289. Over residues 292–309 (ESPSSTTPPIEISSSRLT) the composition is skewed to low complexity. Thr298 carries the post-translational modification Phosphothreonine. A Phosphoserine modification is found at Ser381. The disordered stretch occupies residues 453–473 (ECEDSDSETSSSQTSDDDAWK).

This sequence belongs to the vasculin family.

The protein localises to the nucleus. In terms of biological role, possible transcription factor. This is Vasculin-like protein 1 (Gpbp1l1) from Mus musculus (Mouse).